The chain runs to 242 residues: Probable ABC transporter ATP-binding protein PEB1C (242 aa).

One can recognise an ABC transporter domain in the interval 2–236; sequence IELKNVNKYY…PKTERARLFL (235 aa). Residue 34–41 coordinates ATP; that stretch reads GPSGSGKS.

Belongs to the ABC transporter superfamily.

Its subcellular location is the cell inner membrane. In terms of biological role, most probably involved, with PEB1, in a binding-protein-dependent transport system for an amino acid. Probably responsible for energy coupling to the transport system. This chain is Probable ABC transporter ATP-binding protein PEB1C (peb1C), found in Campylobacter jejuni subsp. jejuni serotype O:2 (strain ATCC 700819 / NCTC 11168).